Reading from the N-terminus, the 454-residue chain is Mediator of RNA polymerase II transcription subunit 1 (454 aa).

The protein belongs to the Mediator complex subunit 1 family. As to quaternary structure, component of the Mediator complex.

The protein resides in the nucleus. Its function is as follows. Component of the Mediator complex, a coactivator involved in the regulated transcription of nearly all RNA polymerase II-dependent genes. Mediator functions as a bridge to convey information from gene-specific regulatory proteins to the basal RNA polymerase II transcription machinery. Mediator is recruited to promoters by direct interactions with regulatory proteins and serves as a scaffold for the assembly of a functional preinitiation complex with RNA polymerase II and the general transcription factors. The polypeptide is Mediator of RNA polymerase II transcription subunit 1 (med1) (Schizosaccharomyces pombe (strain 972 / ATCC 24843) (Fission yeast)).